Consider the following 452-residue polypeptide: Pup--protein ligase (452 aa).

Mg(2+) is bound at residue glutamate 9. Arginine 53 contributes to the ATP binding site. Tyrosine 55 provides a ligand contact to Mg(2+). Catalysis depends on aspartate 57, which acts as the Proton acceptor. Residue glutamate 63 participates in Mg(2+) binding. Threonine 66 and tryptophan 419 together coordinate ATP.

It belongs to the Pup ligase/Pup deamidase family. Pup-conjugating enzyme subfamily.

It carries out the reaction ATP + [prokaryotic ubiquitin-like protein]-L-glutamate + [protein]-L-lysine = ADP + phosphate + N(6)-([prokaryotic ubiquitin-like protein]-gamma-L-glutamyl)-[protein]-L-lysine.. The protein operates within protein degradation; proteasomal Pup-dependent pathway. It participates in protein modification; protein pupylation. Its function is as follows. Catalyzes the covalent attachment of the prokaryotic ubiquitin-like protein modifier Pup to the proteasomal substrate proteins, thereby targeting them for proteasomal degradation. This tagging system is termed pupylation. The ligation reaction involves the side-chain carboxylate of the C-terminal glutamate of Pup and the side-chain amino group of a substrate lysine. The sequence is that of Pup--protein ligase from Geodermatophilus obscurus (strain ATCC 25078 / DSM 43160 / JCM 3152 / CCUG 61914 / KCC A-0152 / KCTC 9177 / NBRC 13315 / NRRL B-3577 / G-20).